Reading from the N-terminus, the 364-residue chain is tRNA-specific 2-thiouridylase MnmA (364 aa).

ATP-binding positions include 6–13 (AMSGGVDS) and Leu32. Cys101 functions as the Nucleophile in the catalytic mechanism. Cysteines 101 and 193 form a disulfide. Gly125 contributes to the ATP binding site. An interaction with tRNA region spans residues 143 to 145 (KDQ). Cys193 serves as the catalytic Cysteine persulfide intermediate.

It belongs to the MnmA/TRMU family.

The protein localises to the cytoplasm. The catalysed reaction is S-sulfanyl-L-cysteinyl-[protein] + uridine(34) in tRNA + AH2 + ATP = 2-thiouridine(34) in tRNA + L-cysteinyl-[protein] + A + AMP + diphosphate + H(+). Its function is as follows. Catalyzes the 2-thiolation of uridine at the wobble position (U34) of tRNA, leading to the formation of s(2)U34. The protein is tRNA-specific 2-thiouridylase MnmA of Rhodococcus opacus (strain B4).